The chain runs to 88 residues: UPF0250 protein Swoo_3713 (88 aa).

Belongs to the UPF0250 family.

The chain is UPF0250 protein Swoo_3713 from Shewanella woodyi (strain ATCC 51908 / MS32).